The following is a 200-amino-acid chain: Cytochrome c biogenesis ATP-binding export protein CcmA (200 aa).

The region spanning 2-200 (LDVIELDFDY…NKADYEEYHL (199 aa)) is the ABC transporter domain. 34 to 41 (GSNGAGKT) lines the ATP pocket.

The protein belongs to the ABC transporter superfamily. CcmA exporter (TC 3.A.1.107) family. The complex is composed of two ATP-binding proteins (CcmA) and two transmembrane proteins (CcmB).

The protein localises to the cell inner membrane. The enzyme catalyses heme b(in) + ATP + H2O = heme b(out) + ADP + phosphate + H(+). Part of the ABC transporter complex CcmAB involved in the biogenesis of c-type cytochromes; once thought to export heme, this seems not to be the case, but its exact role is uncertain. Responsible for energy coupling to the transport system. The sequence is that of Cytochrome c biogenesis ATP-binding export protein CcmA from Legionella pneumophila (strain Lens).